The following is a 1218-amino-acid chain: MKSKLKLKRYLLFLPLLPLGTLSLANTYLLQDHNTLTPYTPFTTPLNGGLDVVRAAHLHPSYELVDWKRVGDTKLVALVRSALVRVKFQDTTSSDQSNTNQNALSFDTQESQKALNGSQSGSSDTSGSNSQDFASYVLIFKAAPRATWVFERKIKLALPYVKQESQGSGDQGSNGKGSLYKTLQDLLVEQPVTPYTPNAGLARVNGVAQDTVHFGSGQESSWNSQRSQKGLKNNPGPKAVTGFKLDKGRAYRKLNESWPVYEPLDSTKEGKGKDESSWKNSEKTTAENDAPLVGMVGSGAAGSASSLQGNGSNSSGLKSLLRSAPVSVPPSSTSNQTLSLSNPAPVGPQAVVSQPAGGATAAVSVNRTASDTATFSKYLNTAQALHQMGVIVPGLEKWGGNNGTGVVASRQDATSTNLPHAAGASQTGLGTGSPREPALTATSQRAVTVVAGPLRAGNSSETDALPNVITQLYHTSTAQLAYLNGQIVVMGSDRVPSLWYWVVGEDQESGKATWWAKTELNWGTDKQKQFVENQLGFKDDSNSDSKNSNLKAQGLTQPAYLIAGLDVVADHLVFAAFKAGAVGYDMTTDSSASTYNQALAWSTTAGLDSDGGYKALVENTAGLNGPINGLFTLLDTFAYVTPVSGMKGGSQNNEEVQTTYPVKSDQKATAKIASLINASPLNSYGDDGVTVFDALGLNFNFKLNEERLPSRTDQLLVYGIVNESELKSARENAQSTSDDNSNTKVKWTNTASHYLPVPYYYSANFPEAGNRRRAEQRNGVKISTLESQATDGFANSLLNFGTGLKAGVDPAPVARGHKPNYSAVLLVRGGVVRLNFNPDTDKLLDSTDKNSEPISFSYTPFGSAESAVDLTTLKDVTYIAESGLWFYTFDNGEKPTYDGKQQQVKNRKGYAVITVSRTGIEFNEDANTTTLSQAPAALAVQNGIASSQDDLTGILPLSDEFSAVITKDQTWTGKVDIYKNTNGLFEKDDQLSENVKRRDNGLVPIYNEGIVDIWGRVDFAANSVLQARNLTDKTVDEVINNPDILQSFFKFTPAFDNQRAMLVGEKTSDTTLTVKPKIEYLDGNFYGEDSKIAGIPLNIDFPSRIFAGFAALPSWVIPVSVGSSVGILLILLILGLGIGIPMYKVRKLQDSSFVDVFKKVDTLTTAVGSVYKKIITQTSVIKKAPSALKAANNAAPKAPVKPAAPTAPRPPVQPPKKA.

The first 25 residues, 1–25 (MKSKLKLKRYLLFLPLLPLGTLSLA), serve as a signal peptide directing secretion. Disordered stretches follow at residues 109–129 (QESQKALNGSQSGSSDTSGSN), 213–245 (HFGSGQESSWNSQRSQKGLKNNPGPKAVTGFKL), 262–353 (EPLD…AVVS), and 411–440 (QDATSTNLPHAAGASQTGLGTGSPREPALT). Low complexity predominate over residues 116 to 129 (NGSQSGSSDTSGSN). Over residues 217–231 (GQESSWNSQRSQKGL) the composition is skewed to polar residues. Positions 265–286 (DSTKEGKGKDESSWKNSEKTTA) are enriched in basic and acidic residues. A compositionally biased stretch (low complexity) spans 301–342 (AGSASSLQGNGSNSSGLKSLLRSAPVSVPPSSTSNQTLSLSN). Residues 411–428 (QDATSTNLPHAAGASQTG) are compositionally biased toward polar residues. A helical transmembrane segment spans residues 1121–1141 (VGSSVGILLILLILGLGIGIP). The span at 1192–1204 (NNAAPKAPVKPAA) shows a compositional bias: low complexity. The disordered stretch occupies residues 1192–1218 (NNAAPKAPVKPAAPTAPRPPVQPPKKA). Over residues 1205-1218 (PTAPRPPVQPPKKA) the composition is skewed to pro residues.

The protein resides in the cell membrane. The polypeptide is Mgp-operon protein 3 (Mycoplasma pneumoniae (strain ATCC 29342 / M129 / Subtype 1) (Mycoplasmoides pneumoniae)).